A 630-amino-acid chain; its full sequence is MNVDLRLIVRLLLAILLTSLVTTILMGKQIHRRLVKSMVKTTGEKDSLPARQLPKREISPKVADFPPPLTLNQTELDILKIQRNNSFRLPQQEAIKEWQDAIFFKEDSNRRGLGEQGRAVQLPNAKLNPDDFQDFYAELSDRIPLNRSLPDTRPISCRKRKYLENLPNVTVIIAFHDEHLSVLLRSITSIINRSPVELLKQIVLVDDDSNLPELGQQLEEIVAQNFPKIIHILRLPERRGSIKARMEAIRVSSCQVLVFLDSHIEVNTNWLPPLLEPIVINPHIVTRPILDAISRKTFAYAKQNTMTRSGFNWWLESESLPIFPEDKSPDSTPYRTPVLSGAMAIDRNYFLNLGGFDEQLDTWEAEKFEISFKVWMCGGMMLYVPCARVGHIGKRPMKSISSPGYHNFLARNYKRVAEVWMDNYKKYVYDKNPKLYKMANAGLLFQRKTKRNALECKTFDWYMTKVAPDFLKRYLALDSPLVFSGVIESVAFPGFCVDSLNCRHTKPVVLARCTGHNSMPGEHQNWSLTQDHEIQLTNSKDDCLEAQGLRSKSVWLFRCHKNGGNQYWYYNHRHRWIQQGQIWVWCLEAQLASGHKVGKVLANKICDKNQLEQQWKVGRNAPYDPQREPH.

Residues 1–6 are Cytoplasmic-facing; the sequence is MNVDLR. The chain crosses the membrane as a helical; Signal-anchor for type II membrane protein span at residues 7 to 26; it reads LIVRLLLAILLTSLVTTILM. At 27–630 the chain is on the lumenal side; it reads GKQIHRRLVK…APYDPQREPH (604 aa). Asn-72, Asn-84, Asn-146, and Asn-168 each carry an N-linked (GlcNAc...) asparagine glycan. 3 disulfide bridges follow: Cys-157–Cys-386, Cys-377–Cys-456, and Cys-496–Cys-513. Residues 166-277 form a catalytic subdomain A region; the sequence is LPNVTVIIAF…TNWLPPLLEP (112 aa). Residues Asp-207 and Arg-238 each coordinate substrate. Position 261 (Asp-261) interacts with Mn(2+). Ser-262 contacts substrate. Position 263 (His-263) interacts with Mn(2+). Positions 333 to 394 are catalytic subdomain B; it reads PYRTPVLSGA…PCARVGHIGK (62 aa). Trp-363 is a binding site for substrate. Residue His-391 participates in Mn(2+) binding. In terms of domain architecture, Ricin B-type lectin spans 483-618; sequence FSGVIESVAF…NQLEQQWKVG (136 aa). Asn-525 carries N-linked (GlcNAc...) asparagine glycosylation. Intrachain disulfides connect Cys-543–Cys-559 and Cys-586–Cys-606.

It belongs to the glycosyltransferase 2 family. GalNAc-T subfamily. Requires Mn(2+) as cofactor. During embryonic stages 9-11, weakly expressed in the mesoderm. During embryonic stages 12-13, very weak expression is observed in the somatic mesoderm region. No expression detected from stage 14-15. During embryonic stages 16-17, expressed in the epidermis and the antennomaxillary complex. In third instar larvae, expressed ubiquitously in wing, eye-antennal, leg and haltere imaginal disks.

It is found in the golgi apparatus membrane. It catalyses the reaction L-seryl-[protein] + UDP-N-acetyl-alpha-D-galactosamine = a 3-O-[N-acetyl-alpha-D-galactosaminyl]-L-seryl-[protein] + UDP + H(+). It carries out the reaction L-threonyl-[protein] + UDP-N-acetyl-alpha-D-galactosamine = a 3-O-[N-acetyl-alpha-D-galactosaminyl]-L-threonyl-[protein] + UDP + H(+). Its pathway is protein modification; protein glycosylation. May catalyze the initial reaction in O-linked oligosaccharide biosynthesis, the transfer of an N-acetyl-D-galactosamine residue to a serine or threonine residue on the protein receptor. The sequence is that of Putative polypeptide N-acetylgalactosaminyltransferase 10 (pgant10) from Drosophila melanogaster (Fruit fly).